A 275-amino-acid chain; its full sequence is NH(3)-dependent NAD(+) synthetase (275 aa).

50–57 lines the ATP pocket; it reads GISGGVDS. D56 contacts Mg(2+). R147 provides a ligand contact to deamido-NAD(+). T167 is a binding site for ATP. E172 serves as a coordination point for Mg(2+). The deamido-NAD(+) site is built by K180 and D187. The ATP site is built by K196 and T218. Residue 267–268 participates in deamido-NAD(+) binding; sequence HK.

The protein belongs to the NAD synthetase family. In terms of assembly, homodimer.

It catalyses the reaction deamido-NAD(+) + NH4(+) + ATP = AMP + diphosphate + NAD(+) + H(+). It functions in the pathway cofactor biosynthesis; NAD(+) biosynthesis; NAD(+) from deamido-NAD(+) (ammonia route): step 1/1. Functionally, catalyzes the ATP-dependent amidation of deamido-NAD to form NAD. Uses ammonia as a nitrogen source. The protein is NH(3)-dependent NAD(+) synthetase of Pseudomonas entomophila (strain L48).